The primary structure comprises 308 residues: Oligopeptide transport system permease protein AmiD (308 aa).

6 helical membrane-spanning segments follow: residues T43–F63, I111–I131, V145–A167, N171–L193, M234–I254, and A274–V294. The region spanning A107–G295 is the ABC transmembrane type-1 domain.

It belongs to the binding-protein-dependent transport system permease family. OppBC subfamily.

The protein localises to the cell membrane. Its function is as follows. Part of the binding-protein-dependent transport system for oligopeptides; probably responsible for the translocation of the substrate across the membrane. This is Oligopeptide transport system permease protein AmiD (amiD) from Streptococcus pneumoniae (strain ATCC BAA-255 / R6).